Here is a 309-residue protein sequence, read N- to C-terminus: MSAKIIRIATRQSPLALWQANHVREMLVKQWPNLSIELLPMITSGDRFLKDKLLSAGGKGLFVKELEEALLDKRADLAVHSTKDMPAQLPDGLSLAAICKRDNPFDALISPQFKSLDALPKNAIIGTSSLRRQSQLLAYNPNLQVKTLRGNIHTRLSKLESGEYQAIILAAAGLERMGLAHHITQLIPDDIMLPTCAQGALCIECRTDDLEIQELIYGLNDPISALCVHTERRVNAKLGGNCHIPFAVYCTITAENLLLLRAKVLNLDGSQMIDDEQQGKIEEAEIIADRCTESLMTKGAMTLLSTIPS.

Cys-242 is subject to S-(dipyrrolylmethanemethyl)cysteine.

This sequence belongs to the HMBS family. As to quaternary structure, monomer. Requires dipyrromethane as cofactor.

The enzyme catalyses 4 porphobilinogen + H2O = hydroxymethylbilane + 4 NH4(+). The protein operates within porphyrin-containing compound metabolism; protoporphyrin-IX biosynthesis; coproporphyrinogen-III from 5-aminolevulinate: step 2/4. Tetrapolymerization of the monopyrrole PBG into the hydroxymethylbilane pre-uroporphyrinogen in several discrete steps. The chain is Porphobilinogen deaminase from Legionella pneumophila (strain Lens).